The primary structure comprises 130 residues: Large ribosomal subunit protein bL12 (130 aa).

Belongs to the bacterial ribosomal protein bL12 family. Homodimer. Part of the ribosomal stalk of the 50S ribosomal subunit. Forms a multimeric L10(L12)X complex, where L10 forms an elongated spine to which 2 to 4 L12 dimers bind in a sequential fashion. Binds GTP-bound translation factors.

Forms part of the ribosomal stalk which helps the ribosome interact with GTP-bound translation factors. Is thus essential for accurate translation. The polypeptide is Large ribosomal subunit protein bL12 (Nostoc punctiforme (strain ATCC 29133 / PCC 73102)).